Consider the following 220-residue polypeptide: dTTP/UTP pyrophosphatase (220 aa).

D83 functions as the Proton acceptor in the catalytic mechanism.

It belongs to the Maf family. YhdE subfamily. Requires a divalent metal cation as cofactor.

It is found in the cytoplasm. The enzyme catalyses dTTP + H2O = dTMP + diphosphate + H(+). It carries out the reaction UTP + H2O = UMP + diphosphate + H(+). Its function is as follows. Nucleoside triphosphate pyrophosphatase that hydrolyzes dTTP and UTP. May have a dual role in cell division arrest and in preventing the incorporation of modified nucleotides into cellular nucleic acids. The polypeptide is dTTP/UTP pyrophosphatase (Syntrophotalea carbinolica (strain DSM 2380 / NBRC 103641 / GraBd1) (Pelobacter carbinolicus)).